The primary structure comprises 338 residues: tRNA pseudouridine synthase D (338 aa).

D79 acts as the Nucleophile in catalysis. Residues 154-303 (GVPNYFGEQR…EEAWRANILY (150 aa)) enclose the TRUD domain.

This sequence belongs to the pseudouridine synthase TruD family.

It carries out the reaction uridine(13) in tRNA = pseudouridine(13) in tRNA. In terms of biological role, responsible for synthesis of pseudouridine from uracil-13 in transfer RNAs. The protein is tRNA pseudouridine synthase D of Legionella pneumophila (strain Corby).